Here is a 370-residue protein sequence, read N- to C-terminus: Leucine-rich repeat-containing protein 19 (370 aa).

Residues 1–24 (MKVTGITILFWPLSMILLSDKIQS) form the signal peptide. Residues 25-270 (SKREVQCNFT…SEHEPLGKSW (246 aa)) are Extracellular-facing. 4 N-linked (GlcNAc...) asparagine glycosylation sites follow: asparagine 32, asparagine 37, asparagine 62, and asparagine 95. LRR repeat units follow at residues 46–71 (KKDV…VLQT), 72–95 (YFLL…GFGN), 96–119 (LSSL…AFLG), 120–143 (LNKL…VFVP), and 145–168 (RSLK…LFHL). The 52-residue stretch at 176 to 227 (NLWNCSCSLFNLQNWLNTSNVTLENENITMCSYPNSLQSYNIKTVPHKAECH) folds into the LRRCT domain. N-linked (GlcNAc...) asparagine glycans are attached at residues asparagine 179, asparagine 192, asparagine 195, asparagine 202, asparagine 251, and asparagine 256. The chain crosses the membrane as a helical span at residues 271–291 (AFLVGVVVTVLTTSLLIFIAI). The Cytoplasmic portion of the chain corresponds to 292–370 (KCPIWYNILL…IDIHELCEEN (79 aa)).

In terms of assembly, interacts with TRAF2 and TRAF6. In terms of tissue distribution, expressed in renal collecting duct epithelial cells.

Its subcellular location is the membrane. Its activity is regulated as follows. Activated by TLR ligands such as LPS, bacterial DNA and peptidoglycan. In terms of biological role, pathogen-recognition receptor which mediates the activation of TRAF2- and TRAF6 NF-kappa-B signaling pathways and induces the expression of pro-inflammatory cytokines. In kidney, prevents infection by uropathogenic bacteria by inducing the production of cytokines, chemokines and antimicrobial substances. In gut, involved in host-microbiota interactions, plays a critical role in promoting the recruitment of immune cells and intestinal inflammation. In Homo sapiens (Human), this protein is Leucine-rich repeat-containing protein 19.